We begin with the raw amino-acid sequence, 316 residues long: Ribose-phosphate pyrophosphokinase (316 aa).

Residues 37-39 and 96-97 each bind ATP; these read DGE and RQ. The Mg(2+) site is built by His-131 and Asp-171. Lys-195 is a catalytic residue. D-ribose 5-phosphate-binding positions include Arg-197, Asp-221, and 225 to 229; that span reads DTGGT.

It belongs to the ribose-phosphate pyrophosphokinase family. Class I subfamily. As to quaternary structure, homohexamer. Requires Mg(2+) as cofactor.

Its subcellular location is the cytoplasm. The enzyme catalyses D-ribose 5-phosphate + ATP = 5-phospho-alpha-D-ribose 1-diphosphate + AMP + H(+). It participates in metabolic intermediate biosynthesis; 5-phospho-alpha-D-ribose 1-diphosphate biosynthesis; 5-phospho-alpha-D-ribose 1-diphosphate from D-ribose 5-phosphate (route I): step 1/1. Involved in the biosynthesis of the central metabolite phospho-alpha-D-ribosyl-1-pyrophosphate (PRPP) via the transfer of pyrophosphoryl group from ATP to 1-hydroxyl of ribose-5-phosphate (Rib-5-P). The polypeptide is Ribose-phosphate pyrophosphokinase (Haemophilus ducreyi (strain 35000HP / ATCC 700724)).